Consider the following 221-residue polypeptide: MKEHVLVILPHPDDESYGVAGLIALNRKKDIPVTYACATLGEMGRNMGDPFFANRETLPLLRKQELINACKEMDINDLRMLGLRDKTLEFEDDEYLADIMEEIIDDVKPSLIVTFYPGHGVHPDHDACGEAVIRALYRKKKEDRPRTICMAITRNREEVLGEADVVLDIKEVADIKMNALRAHRTQTEGMLRELEEKLKNNEPVMATWFEEEIYWTYQWND.

Residues H11, D14, and H125 each contribute to the Zn(2+) site.

This sequence belongs to the PIGL family. It depends on Zn(2+) as a cofactor.

It catalyses the reaction (S)-malyl N-acetyl-alpha-D-glucosaminide + H2O = (S)-malyl alpha-D-glucosaminide + acetate. In terms of biological role, involved in bacillithiol (BSH) biosynthesis. Catalyzes the second step of the pathway, the deacetylation of N-acetylglucosaminylmalate (GlcNAc-Mal) to glucosamine malate (GlcN-Mal). This Bacillus subtilis (strain 168) protein is Probable N-acetyl-alpha-D-glucosaminyl L-malate deacetylase 2.